Here is a 301-residue protein sequence, read N- to C-terminus: Leucine-rich repeat-containing protein 30 (301 aa).

LRR repeat units lie at residues 72–93 (EVQKLNLSHNQLRVLPPEVGKL), 95–116 (RIVVLNLCGNRLKSLPREVSLL), 118–139 (CLKVLFVNMNCLTEVPAELSLC), 141–163 (KLEVLSLSHNCLSQLPACFADLS), 164–185 (RLRKLNLSNNFFAHIPMCVFSL), 187–208 (ELIFLHVGSNRLENIAESIQHL), 210–231 (SLQIFIAEGNNIHSFPRSLCLV), 233–254 (SLELLNLNNNDIQTLPSELHLL), and 265–287 (MDKGLHISHNPLSKPLPELVEGG).

The polypeptide is Leucine-rich repeat-containing protein 30 (LRRC30) (Homo sapiens (Human)).